The primary structure comprises 312 residues: Cytochrome f (312 aa).

An N-terminal signal peptide occupies residues 1–30; the sequence is MYLSKNFFLNLKTFIFSFFVLCFFSQSAQA. 4 residues coordinate heme: Tyr-31, Cys-51, Cys-54, and His-55. Residues 278 to 298 traverse the membrane as a helical segment; sequence VQGLLLFSLFILLAQIFLVLK.

Belongs to the cytochrome f family. In terms of assembly, the 4 large subunits of the cytochrome b6-f complex are cytochrome b6, subunit IV (17 kDa polypeptide, petD), cytochrome f and the Rieske protein, while the 4 small subunits are PetG, PetL, PetM and PetN. The complex functions as a dimer. It depends on heme as a cofactor.

The protein resides in the plastid. It localises to the chloroplast thylakoid membrane. Component of the cytochrome b6-f complex, which mediates electron transfer between photosystem II (PSII) and photosystem I (PSI), cyclic electron flow around PSI, and state transitions. This is Cytochrome f (petA) from Bigelowiella natans (Pedinomonas minutissima).